The following is a 284-amino-acid chain: Bifunctional protein FolD (284 aa).

NADP(+)-binding positions include 166-168 (GAS) and Ile-232.

The protein belongs to the tetrahydrofolate dehydrogenase/cyclohydrolase family. In terms of assembly, homodimer.

It carries out the reaction (6R)-5,10-methylene-5,6,7,8-tetrahydrofolate + NADP(+) = (6R)-5,10-methenyltetrahydrofolate + NADPH. It catalyses the reaction (6R)-5,10-methenyltetrahydrofolate + H2O = (6R)-10-formyltetrahydrofolate + H(+). It participates in one-carbon metabolism; tetrahydrofolate interconversion. In terms of biological role, catalyzes the oxidation of 5,10-methylenetetrahydrofolate to 5,10-methenyltetrahydrofolate and then the hydrolysis of 5,10-methenyltetrahydrofolate to 10-formyltetrahydrofolate. The protein is Bifunctional protein FolD of Pseudomonas fluorescens (strain Pf0-1).